Consider the following 295-residue polypeptide: 4-hydroxy-tetrahydrodipicolinate synthase (295 aa).

Thr-46 serves as a coordination point for pyruvate. The Proton donor/acceptor role is filled by Tyr-134. Lys-162 acts as the Schiff-base intermediate with substrate in catalysis. Ile-205 provides a ligand contact to pyruvate.

It belongs to the DapA family. Homotetramer; dimer of dimers.

It is found in the cytoplasm. The enzyme catalyses L-aspartate 4-semialdehyde + pyruvate = (2S,4S)-4-hydroxy-2,3,4,5-tetrahydrodipicolinate + H2O + H(+). It functions in the pathway amino-acid biosynthesis; L-lysine biosynthesis via DAP pathway; (S)-tetrahydrodipicolinate from L-aspartate: step 3/4. Functionally, catalyzes the condensation of (S)-aspartate-beta-semialdehyde [(S)-ASA] and pyruvate to 4-hydroxy-tetrahydrodipicolinate (HTPA). The chain is 4-hydroxy-tetrahydrodipicolinate synthase from Anaeromyxobacter dehalogenans (strain 2CP-C).